A 101-amino-acid chain; its full sequence is Small ribosomal subunit protein uS10 (101 aa).

This sequence belongs to the universal ribosomal protein uS10 family. As to quaternary structure, part of the 30S ribosomal subunit.

Functionally, involved in the binding of tRNA to the ribosomes. The sequence is that of Small ribosomal subunit protein uS10 from Mycobacterium leprae (strain Br4923).